The chain runs to 253 residues: MPTWDDQQYLKFADERTRAARDLLARVPLDDAATVVDLGCGPGNSTALLVERWPQARVVGVDSSAEMLRSARQALPQVEWMQADLRAWAPAAPVDLIFANAVMQWLPDHATLLPELLRHLRPGGVLAIQMPRNYDEPSHRLMRETPGPWAARLAGARAIAPLPAAAWYYDLLAPHARQLELWQTTYEQVMDDAGAIVEWVRGTGLRPYLEALAEDEHPAYLAAYEAGIDAAYPPRSDGRRLFPFPRLFMVAVR.

This sequence belongs to the methyltransferase superfamily. Tam family.

Its subcellular location is the cytoplasm. It catalyses the reaction trans-aconitate + S-adenosyl-L-methionine = (E)-3-(methoxycarbonyl)pent-2-enedioate + S-adenosyl-L-homocysteine. In terms of biological role, catalyzes the S-adenosylmethionine monomethyl esterification of trans-aconitate. This Azoarcus sp. (strain BH72) protein is Trans-aconitate 2-methyltransferase.